We begin with the raw amino-acid sequence, 482 residues long: MSILVKNNIHWVGQRDWEVRDFHGTEYKTLRGSSYNSYLIREGKNVLIDTVDHKFSREFVQNLRSEIDLDAIDYIIINHAEEDHAGALTELMSYIPNTPIYCTTNAIDSINGHHHHPEWNFHTVKTGDSLDIGNGKQLIFVETPMLHWPDSMMTYMTGDAVLFSNDAFGQHYCDERLFNDEVDQTELFEQCQRYYANILTPFSRLVTPKITEILGFNLPVDMIATSHGVVWRENPTQIVELYLKWAADYQEDRITLFYDTMSNNTRMMADAIAQGINEVDPNVAVKIFNVARSDKNEILTNVFRSKGVLVGTSTMNNVMMPKIAGLVEEMTGLRFRNKRASAFGSHGWSGGAVDRLSTRLQDAGFEMSMSLKAKWRPDVDALEICRQHGREIARQWALAPLPEASVKPTQQQENCACAAAATADLGPCMQCSVCQWVYDPALGEPLQDVAPGTPWSDVPDNFLCPECSLGKDVFDVLATEAK.

Positions 30-210 are zinc metallo-hydrolase; the sequence is LRGSSYNSYL…PFSRLVTPKI (181 aa). Positions 79, 81, 83, 147, 166, and 227 each coordinate Fe cation. Residues 254–393 enclose the Flavodoxin-like domain; it reads ITLFYDTMSN…ICRQHGREIA (140 aa). Residues 260–264 and 342–369 contribute to the FMN site; these read TMSNN and AFGS…EMSM. The Rubredoxin-like domain maps to 426–477; that stretch reads GPCMQCSVCQWVYDPALGEPLQDVAPGTPWSDVPDNFLCPECSLGKDVFDVL. Cysteine 431, cysteine 434, cysteine 464, and cysteine 467 together coordinate Fe cation.

The protein in the N-terminal section; belongs to the zinc metallo-hydrolase group 3 family. In terms of assembly, homotetramer. Fe cation is required as a cofactor. FMN serves as cofactor.

The protein localises to the cytoplasm. The protein operates within nitrogen metabolism; nitric oxide reduction. In terms of biological role, anaerobic nitric oxide reductase; uses NADH to detoxify nitric oxide (NO), protecting several 4Fe-4S NO-sensitive enzymes. Has at least 2 reductase partners, only one of which (NorW, flavorubredoxin reductase) has been identified. NO probably binds to the di-iron center; electrons enter from the NorW at rubredoxin and are transferred sequentially to the FMN center and the di-iron center. Also able to function as an aerobic oxygen reductase. This Enterobacter sp. (strain 638) protein is Anaerobic nitric oxide reductase flavorubredoxin.